A 376-amino-acid chain; its full sequence is Protein STRICTOSIDINE SYNTHASE-LIKE 2 (376 aa).

An N-terminal signal peptide occupies residues Met1 to Gly23. Asn79 and Asn244 each carry an N-linked (GlcNAc...) asparagine glycan.

The protein belongs to the strictosidine synthase family.

The protein localises to the vacuole. This chain is Protein STRICTOSIDINE SYNTHASE-LIKE 2, found in Arabidopsis thaliana (Mouse-ear cress).